A 209-amino-acid polypeptide reads, in one-letter code: MTPLAVIPFRPLNPKSRLSGIMTREERELFAAAMLTDVIGAVTAAGCTPLVLATTPYTVASVRVRVTDADLSTALNTLLRDQDGPVLIMMADIPLATKEAITAVISADADVAIVPGRGGGTNAIYLQQGSSFATDYYGQSFMKHCRIAEERNLSLEVIDSFRLYVDIDEEEDLVDLLIHGTGESAALLRSFGFQPISMKGRVSVIRSSP.

The protein belongs to the CofC family. Homodimer.

The catalysed reaction is (2S)-2-phospholactate + GTP + H(+) = (2S)-lactyl-2-diphospho-5'-guanosine + diphosphate. It participates in cofactor biosynthesis; coenzyme F420 biosynthesis. Functionally, guanylyltransferase that catalyzes the activation of (2S)-2-phospholactate (2-PL) as (2S)-lactyl-2-diphospho-5'-guanosine, via the condensation of 2-PL with GTP. It is involved in the biosynthesis of coenzyme F420, a hydride carrier cofactor. The polypeptide is 2-phospho-L-lactate guanylyltransferase (Methanosphaerula palustris (strain ATCC BAA-1556 / DSM 19958 / E1-9c)).